The chain runs to 230 residues: Heptaprenylglyceryl phosphate synthase (230 aa).

Residue lysine 12 participates in sn-glycerol 1-phosphate binding. Mg(2+)-binding residues include aspartate 14 and serine 40. Sn-glycerol 1-phosphate contacts are provided by residues tyrosine 159–glycine 164, glycine 189, and glycine 209–asparagine 210.

Belongs to the GGGP/HepGP synthase family. Group I subfamily. In terms of assembly, homodimer. Requires Mg(2+) as cofactor.

It catalyses the reaction sn-glycerol 1-phosphate + all-trans-heptaprenyl diphosphate = 3-heptaprenyl-sn-glycero-1-phosphate + diphosphate. The protein operates within membrane lipid metabolism; glycerophospholipid metabolism. Its function is as follows. Prenyltransferase that catalyzes in vivo the transfer of the heptaprenyl moiety of heptaprenyl pyrophosphate (HepPP; 35 carbon atoms) to the C3 hydroxyl of sn-glycerol-1-phosphate (G1P), producing heptaprenylglyceryl phosphate (HepGP). This reaction is an ether-bond-formation step in the biosynthesis of archaea-type G1P-based membrane lipids found in Bacillales. The polypeptide is Heptaprenylglyceryl phosphate synthase (Bacillus pumilus (strain SAFR-032)).